The sequence spans 238 residues: Probable transcriptional regulatory protein YeeN (238 aa).

Belongs to the TACO1 family. YeeN subfamily.

It localises to the cytoplasm. This chain is Probable transcriptional regulatory protein YeeN, found in Salmonella typhimurium (strain LT2 / SGSC1412 / ATCC 700720).